Reading from the N-terminus, the 367-residue chain is Germination protease (367 aa).

The propeptide occupies 1–15; sequence MKEPLDLSKYSVRTD.

This sequence belongs to the peptidase A25 family. In terms of assembly, homotetramer. Post-translationally, autoproteolytically processed. The inactive tetrameric zymogen termed p46 autoprocesses to a smaller form termed p41, which is active only during spore germination.

The enzyme catalyses Endopeptidase action with P4 Glu or Asp, P1 preferably Glu &gt; Asp, P1' hydrophobic and P2' Ala.. Functionally, initiates the rapid degradation of small, acid-soluble proteins during spore germination. The chain is Germination protease from Bacillus cereus (strain G9842).